Here is a 2715-residue protein sequence, read N- to C-terminus: Teneurin-3 (2715 aa).

2 disordered regions span residues 1-38 and 142-223; these read MDVK…VPTQ and GRSS…AALP. Residues 1–309 form the Teneurin N-terminal domain; the sequence is MDVKERRPYC…KSSKYCSWRC (309 aa). Residues 1–310 are Cytoplasmic-facing; the sequence is MDVKERRPYC…SSKYCSWRCT (310 aa). Residues 142–153 show a composition bias toward low complexity; that stretch reads GRSSCLSSRSNS. Over residues 159–168 the composition is skewed to basic and acidic residues; sequence DTEHENRSDS. Polar residues predominate over residues 171 to 182; that stretch reads EQPSNNPGQPTL. The segment covering 201 to 213 has biased composition (low complexity); the sequence is TSLNRNSLTNRRN. The chain crosses the membrane as a helical span at residues 311–331; sequence ALCAVGVSVLLAILLSYFIAM. Residues 332-2715 are Extracellular-facing; that stretch reads HLFGLNWHLQ…FLRQSEIGKR (2384 aa). N-linked (GlcNAc...) asparagine glycosylation is found at Asn-345, Asn-380, and Asn-419. 8 EGF-like domains span residues 514–545, 546–576, 578–610, 611–642, 644–677, 678–709, 710–739, and 740–783; these read SVVE…PDCS, RAAC…TECD, PTTQ…ENCE, EADC…SNCE, LKTM…PDCS, NEIC…ACNQ, RACH…EHCT, and IAHY…AGCD. 22 disulfides stabilise this stretch: Cys-518-Cys-528, Cys-522-Cys-533, Cys-535-Cys-544, Cys-553-Cys-564, Cys-566-Cys-575, Cys-582-Cys-593, Cys-587-Cys-598, Cys-600-Cys-609, Cys-614-Cys-625, Cys-619-Cys-630, Cys-632-Cys-641, Cys-652-Cys-665, Cys-667-Cys-676, Cys-681-Cys-691, Cys-685-Cys-696, Cys-698-Cys-707, Cys-712-Cys-722, Cys-716-Cys-727, Cys-729-Cys-738, Cys-752-Cys-762, Cys-756-Cys-771, and Cys-773-Cys-782. N-linked (GlcNAc...) asparagine glycosylation occurs at Asn-670. N-linked (GlcNAc...) asparagine glycosylation is found at Asn-869 and Asn-892. The NHL 1 repeat unit spans residues 1181–1209; it reads LLAPVALACGIDGSLYVGDFNYVRRIFPS. A glycan (N-linked (GlcNAc...) asparagine) is linked at Asn-1211. NHL repeat units lie at residues 1216-1260, 1286-1330, 1347-1387, 1418-1445, and 1474-1517; these read LELR…PKSL, ARCG…NGII, CDTS…ITEN, LESA…INRI, and CYQS…VSKN. A YD 1 repeat occupies 1527 to 1546; sequence YEVASPTDQELYIFDINGTH. N-linked (GlcNAc...) asparagine glycosylation is found at Asn-1543 and Asn-1560. YD repeat units lie at residues 1563 to 1583, 1626 to 1645, and 1646 to 1668; these read YSND…LRIR, YHGN…WTTF, and FDYD…TNLH. 4 N-linked (GlcNAc...) asparagine glycosylation sites follow: Asn-1656, Asn-1693, Asn-1751, and Asn-1836. YD repeat units lie at residues 1839 to 1858, 1880 to 1898, 1899 to 1919, 1926 to 1943, 1944 to 1965, 1966 to 1983, 1986 to 2006, 2009 to 2029, 2037 to 2056, 2062 to 2079, 2080 to 2106, 2108 to 2121, 2122 to 2145, 2148 to 2168, 2169 to 2189, 2191 to 2211, 2223 to 2243, and 2245 to 2265; these read YSST…EKVD, YLEK…YIFE, YDMW…HTMQ, YYRN…IITD, YNEE…VLFK, YRRQ…TRVS, YDET…FICT, YRQI…DGMV, YDNS…TPLP, FDDI…GVIY, YDIN…IKEI, YEIF…ITIQ, YDNM…TKYA, YDVD…WRYN, YDLN…LTPL, YDLR…DEDG, YSSK…TVIY, and YDGL…LQFF. The N-linked (GlcNAc...) asparagine glycan is linked to Asn-1937. Asn-2140 is a glycosylation site (N-linked (GlcNAc...) asparagine). Residue Asn-2280 is glycosylated (N-linked (GlcNAc...) asparagine). Residues 2291–2332 form a YD 23 repeat; sequence YDLQGHLFAMEISSGDEFYIASDNTGTPLAVFSSNGLMLKQT. Asn-2592 is a glycosylation site (N-linked (GlcNAc...) asparagine).

It belongs to the tenascin family. Teneurin subfamily. Homodimer; disulfide-linked; to mediate homophilic cell adhesion. Most isoforms (isoform-type A and type-B) can mediate homophilic interaction. Heterodimer with either TENM1 or TENM2. May also form heterodimer with TENM4. Isoform A0B0: Does not form homodimer to mediate homophilic cell adhesion. Isoform A0B0: Heterodimer with ADGRL3. In terms of tissue distribution, in brain, expressed in highly specific regions of the postnatal brain: expressed in restricted domains of the developing hippocampal region, including proximal CA1, distal subiculum, and medial entorhinal cortex (at protein level). Expression matches with topographic connectivity between entorhinal cortex, CA1, and subiculum (at protein level). Also specifically expressed in subregions of the presubiculum, parasubiculum, medial mammillary nucleus and anteroventral thalamic nucleus that are topographically connected with subiculum or entorhinal cortex (at protein level). Expressed in neurons of the developing visual pathway (at protein level). Expressed in the dorsal and ventral lateral geniculate nucleus (dLGN and vLGN) and optic tract at birth. Expressed in ipsilateral retinal axons of terminal zones (TZs) in the developing superior colliculus (SC) throughout the first postnatal week. Expressed in the layer V of the visual caudal cortex. Expressed in the femoral and mandibular condylar cartilages. Strongly expressed in fibrous and proliferating chondrocytes. Poorly expressed in mature chondrocytes. Not expressed in hypertrophic chondrocytes.

It is found in the cell membrane. The protein resides in the cell projection. Its subcellular location is the axon. Its function is as follows. Involved in neural development by regulating the establishment of proper connectivity within the nervous system. Acts in both pre- and postsynaptic neurons in the hippocampus to control the assembly of a precise topographic projection: required in both CA1 and subicular neurons for the precise targeting of proximal CA1 axons to distal subiculum, probably by promoting homophilic cell adhesion. Promotes homophilic adhesion in a splicing isoform-dependent manner: most isoforms (isoform-type A and type-B) can mediate homophilic interaction. Promotes axon guidance. Required for proper dendrite morphogenesis and axon targeting in the vertebrate visual system, thereby playing a key role in the development of the visual pathway. Regulates the formation in ipsilateral retinal mapping to both the dorsal lateral geniculate nucleus (dLGN) and the superior colliculus (SC). May also be involved in the differentiation of the fibroblast-like cells in the superficial layer of mandibular condylar cartilage into chondrocytes. The chain is Teneurin-3 from Mus musculus (Mouse).